Reading from the N-terminus, the 477-residue chain is MIRRLQDSGDLVRAFPRVHFVGIGGTGMSGIAEVMLTLGYEVSGSDNADNAATRRLAKLGARVMRGHSAANVLGTDCVVVSSAIREDNPELMEARSQRIPIMPRAAMLAELMRFRRGIAVAGTHGKTTTTSLAAAVLSEGGLDPTFVIGGQLLAAGANAKLGGGQWLVAEADESDGSFLRLNPLMAVITNIDADHLENYGNDFARVQAAFAEFLQRLPFYGLALLCIDDPEVAALAGKTPRHVMSYGMSENADVRAEDVVQDGPCMRFTLRLPEGTTTPVTLALPGRHNVLNALAAAAIGWQLGVAPDTIARALENFAGIGRRFNDLGEVTTSTGARVRVVDDYGHHPRELEAVFAAARGGWPDKRLVVAFQPHRYSRTRDQFDAFAAVLSTVDALVLSEVYPAGEAPIPGADSRALARAIRARGRSEPVVVGQIAGLAEVLPDVLQDGDLLLMMGAGDIGYVAQHIINNGFVGEPA.

Residue 122 to 128 (GTHGKTT) participates in ATP binding.

It belongs to the MurCDEF family.

It localises to the cytoplasm. The catalysed reaction is UDP-N-acetyl-alpha-D-muramate + L-alanine + ATP = UDP-N-acetyl-alpha-D-muramoyl-L-alanine + ADP + phosphate + H(+). Its pathway is cell wall biogenesis; peptidoglycan biosynthesis. Cell wall formation. In Xanthomonas axonopodis pv. citri (strain 306), this protein is UDP-N-acetylmuramate--L-alanine ligase.